Here is a 271-residue protein sequence, read N- to C-terminus: MSTHADSKPWTVPALAEAKRNGQKLVMLTAYDAGFARTFDANGVDLILIGDSLGMVVQGHDSTLPVTVADMVYHTRAVARVLQRALLVADLPFGADATPERALDASLQLLQAGAEMVKIEGAGFKVDIIRYLVEREIPVCAHLGLTPQSVLRLGGFKIQGRGDAARQLVEDARAVAAAGASIMVLECVPTPVAAEVTAAVDVPTIGIGAGPQCDGQVLVLHDFLGLDSGHRRPKFVKDFLAEGGSVAGATRAYADAVRDGSFPDEQHAYAQ.

The Mg(2+) site is built by aspartate 51 and aspartate 90. 3-methyl-2-oxobutanoate is bound by residues 51–52, aspartate 90, and lysine 118; that span reads DS. Glutamate 120 is a binding site for Mg(2+). Glutamate 186 (proton acceptor) is an active-site residue.

The protein belongs to the PanB family. Homodecamer; pentamer of dimers. The cofactor is Mg(2+).

The protein resides in the cytoplasm. It catalyses the reaction 3-methyl-2-oxobutanoate + (6R)-5,10-methylene-5,6,7,8-tetrahydrofolate + H2O = 2-dehydropantoate + (6S)-5,6,7,8-tetrahydrofolate. It functions in the pathway cofactor biosynthesis; (R)-pantothenate biosynthesis; (R)-pantoate from 3-methyl-2-oxobutanoate: step 1/2. Its function is as follows. Catalyzes the reversible reaction in which hydroxymethyl group from 5,10-methylenetetrahydrofolate is transferred onto alpha-ketoisovalerate to form ketopantoate. This is 3-methyl-2-oxobutanoate hydroxymethyltransferase from Stenotrophomonas maltophilia (strain R551-3).